We begin with the raw amino-acid sequence, 101 residues long: Protein translation factor SUI1 homolog (101 aa).

This sequence belongs to the SUI1 family.

The polypeptide is Protein translation factor SUI1 homolog (Methanothermobacter thermautotrophicus (strain ATCC 29096 / DSM 1053 / JCM 10044 / NBRC 100330 / Delta H) (Methanobacterium thermoautotrophicum)).